A 296-amino-acid chain; its full sequence is Nucleotide-binding protein str0831 (296 aa).

Residue G13–T20 coordinates ATP. Residue D63–S66 coordinates GTP.

It belongs to the RapZ-like family.

Displays ATPase and GTPase activities. The chain is Nucleotide-binding protein str0831 from Streptococcus thermophilus (strain CNRZ 1066).